Consider the following 852-residue polypeptide: Polyphosphate kinase (852 aa).

2 disordered regions span residues 1–36 and 58–82; these read MATGVSSRDGSRERIRRRAVARDHPGCGPHRLDRPI and SHDPAPSQSVGKRPQKSTKTASRRK. Over residues 20–36 the composition is skewed to basic and acidic residues; that stretch reads VARDHPGCGPHRLDRPI. The span at 58-67 shows a compositional bias: polar residues; it reads SHDPAPSQSV. N131 serves as a coordination point for ATP. The interval 251 to 303 is disordered; the sequence is GDEIGPQRTPPPSDSLDNRVPSNLKRNSDTANQQPTPAENISAPEDGAEQTEP. The tract at residues 258 to 303 is insert; sequence RTPPPSDSLDNRVPSNLKRNSDTANQQPTPAENISAPEDGAEQTEP. A compositionally biased stretch (polar residues) spans 270 to 289; that stretch reads VPSNLKRNSDTANQQPTPAE. R524 and R554 together coordinate Mg(2+). H584 functions as the Phosphohistidine intermediate in the catalytic mechanism. Positions 617, 713, and 741 each coordinate ATP.

Belongs to the polyphosphate kinase 1 (PPK1) family. The cofactor is Mg(2+). In terms of processing, an intermediate of this reaction is the autophosphorylated ppk in which a phosphate is covalently linked to a histidine residue through a N-P bond.

The catalysed reaction is [phosphate](n) + ATP = [phosphate](n+1) + ADP. In terms of biological role, catalyzes the reversible transfer of the terminal phosphate of ATP to form a long-chain polyphosphate (polyP). This is Polyphosphate kinase from Rhodopirellula baltica (strain DSM 10527 / NCIMB 13988 / SH1).